A 530-amino-acid chain; its full sequence is Apolipoprotein N-acyltransferase (530 aa).

The next 6 helical transmembrane spans lie at 19 to 39 (LIAG…PGLL), 65 to 85 (WLAG…AFLV), 96 to 116 (FAVT…ALLY), 128 to 148 (LTFA…LTGF), 169 to 189 (LVGA…PAVW), and 197 to 217 (AATG…AIAL). The 254-residue stretch at 232–485 (VQADIKQDLK…SGVIDAQIPG (254 aa)) folds into the CN hydrolase domain. Glu-274 (proton acceptor) is an active-site residue. Lys-343 is a catalytic residue. Cys-396 serves as the catalytic Nucleophile.

It belongs to the CN hydrolase family. Apolipoprotein N-acyltransferase subfamily.

The protein localises to the cell inner membrane. It catalyses the reaction N-terminal S-1,2-diacyl-sn-glyceryl-L-cysteinyl-[lipoprotein] + a glycerophospholipid = N-acyl-S-1,2-diacyl-sn-glyceryl-L-cysteinyl-[lipoprotein] + a 2-acyl-sn-glycero-3-phospholipid + H(+). It participates in protein modification; lipoprotein biosynthesis (N-acyl transfer). Its function is as follows. Catalyzes the phospholipid dependent N-acylation of the N-terminal cysteine of apolipoprotein, the last step in lipoprotein maturation. This chain is Apolipoprotein N-acyltransferase, found in Caulobacter vibrioides (strain ATCC 19089 / CIP 103742 / CB 15) (Caulobacter crescentus).